We begin with the raw amino-acid sequence, 534 residues long: Calmodulin calcium-dependent NAD kinase (534 aa).

A calmodulin-binding region spans residues Gln-167–Arg-196. An ATP-binding site is contributed by Gly-238 to Ser-245.

In terms of assembly, interacts with calmodulin (CaM) in a calcium Ca(2+)-dependent manner in vitro. Ca(2+) is required as a cofactor.

The protein resides in the mitochondrion outer membrane. The enzyme catalyses NAD(+) + ATP = ADP + NADP(+) + H(+). In terms of biological role, phosphorylates NAD(+) to produce NADP(+) in a calmodulin calcium-dependent manner. Does not possess activity toward NADH. Has broad specificity for the phosphoryl donor, as ATP, CTP, GTP and UTP can be used interchangeably and produce similar efficiencies. May play a role in producing NADP(H) needed to regulate the elicitor-induced reactive oxygen species (ROS) burst by sustaining the activity of NADPH oxidases. Does not seem to play a role in photosynthesis-driven growth. In Arabidopsis thaliana (Mouse-ear cress), this protein is Calmodulin calcium-dependent NAD kinase.